A 114-amino-acid chain; its full sequence is PDZK1-interacting protein 1 (114 aa).

Residues 1–28 are Extracellular-facing; it reads MSALSLVILGLLMAVPPASCQQGLGNLQ. A helical membrane pass occupies residues 29–51; the sequence is PWMQGLIAVAVFLVLVAIAFAIN. The Cytoplasmic portion of the chain corresponds to 52-114; it reads HFWCQEEREP…EEGRVHSTPM (63 aa). A Phosphoserine modification is found at serine 85. Residues 92 to 114 are disordered; it reads SNEHENAYENTSEEEGRVHSTPM. Positions 105–114 are enriched in basic and acidic residues; the sequence is EEGRVHSTPM.

This sequence belongs to the PDZK1-interacting protein 1/SMIM24 family. Forms a heterodimer (via N-terminal transmembrane helix) with SLC5A2/SGLT2 (via TM13); this interaction enhances SLC5A2 transporter activity. Interacts with PDZK1.

Its subcellular location is the apical cell membrane. Auxiliary protein of electrogenic Na(+)-coupled sugar symporter SLC5A2/SGLT2 and SLC5A1/SGLT1. Essential for the transporter activity of SLC5A2/SGLT2 but not SLC5A1/SGLT1. The protein is PDZK1-interacting protein 1 of Sus scrofa (Pig).